The primary structure comprises 1482 residues: MKPSAECCSPKFWLVLAVLAVSGSKARSQKSPPSIGIAVILVGTSDEVAIKDAHEKDDFHHLSVVPRVELVAMNETDPKSIITRICDLMSDRKIQGVVFADDTDQEAIAQILDFISAQTLTPILGIHGGSSMIMADKDESSMFFQFGPSIEQQASVMLNIMEEYDWYIFSIVTTYFPGYQDFVNKIRSTIENSFVGWELEEVLLLDMSLDDGDSKIQNQLKKLQSPIILLYCTKEEATYIFEVANSVGLTGYGYTWIVPSLVAGDTDTVPSEFPTGLISVSYDEWDYGLPARVRDGIAIITTAASDMLSEHSFIPEPKSSCYNTHEKRIYQSNMLNRYLINVTFEGRNLSFSEDGYQMHPKLVIILLNKERKWERVGKWKDKSLQMKYYVWPRMCPETEEQEDDHLSIVTLEEAPFVIVESVDPLSGTCMRNTVPCQKRIISENKTDEEPGYIKKCCKGFCIDILKKISKSVKFTYDLYLVTNGKHGKKINGTWNGMIGEVVMKRAYMAVGSLTINEERSEVVDFSVPFIETGISVMVSRSNGTVSPSAFLEPFSADVWVMMFVMLLIVSAVAVFVFEYFSPVGYNRCLADGREPGGPSFTIGKAIWLLWGLVFNNSVPVQNPKGTTSKIMVSVWAFFAVIFLASYTANLAAFMIQEEYVDQVSGLSDKKFQRPNDFSPPFRFGTVPNGSTERNIRNNYAEMHAYMGKFNQRGVDDALLSLKTGKLDAFIYDAAVLNYMAGRDEGCKLVTIGSGKVFASTGYGIAIQKDSGWKRQVDLAILQLFGDGEMEELEALWLTGICHNEKNEVMSSQLDIDNMAGVFYMLGAAMALSLITFICEHLFYWQFRHCFMGVCSGKPGMVFSISRGIYSCIHGVAIEERQSVMNSPTATMNNTHSNILRLLRTAKNMANLSGVNGSPQSALDFIRRESSVYDISEHRRSFTHSDCKSYNNPPCEENLFSDYISEVERTFGNLQLKDSNVYQDHYHHHHRPHSIGSTSSIDGLYDCDNPPFTTQPRSISKKPLDIGLPSSKHSQLSDLYGKFSFKSDRYSGHDDLIRSDVSDISTHTVTYGNIEGNAAKRRKQQYKDSLKKRPASAKSRREFDEIELAYRRRPPRSPDHKRYFRDKEGLRDFYLDQFRTKENSPHWEHVDLTDIYKERSDDFKRDSVSGGGPCTNRSHLKHGTGEKHGVVGGVPAPWEKNLTNVDWEDRSGGNFCRSCPSKLHNYSSTVAGQNSGRQACIRCEACKKAGNLYDISEDNSLQELDQPAAPVAVTSNASSTKYPQSPTNSKAQKKNRNKLRRQHSYDTFVDLQKEEAALAPRSVSLKDKGRFMDGSPYAHMFEMPAGESSFANKSSVPTAGHHHNNPGSGYMLSKSLYPDRVTQNPFIPTFGDDQCLLHGSKSYFFRQPTVAGASKTRPDFRALVTNKPVVVTLHGAVPGRFQKDICIGNQSNPCVPNNKNPRAFNGSSNGHVYEKLSSIESDV.

A signal peptide spans 1-26 (MKPSAECCSPKFWLVLAVLAVSGSKA). Residues 27 to 557 (RSQKSPPSIG…SAFLEPFSAD (531 aa)) lie on the Extracellular side of the membrane. Residue N74 is glycosylated (N-linked (GlcNAc...) asparagine). A disulfide bridge links C86 with C321. Zn(2+) is bound by residues H127 and E284. 4 N-linked (GlcNAc...) asparagine glycosylation sites follow: N341, N348, N444, and N491. Cystine bridges form between C429–C456 and C436–C457. Residues T514 and R519 each coordinate L-glutamate. Residue N542 is glycosylated (N-linked (GlcNAc...) asparagine). Residues 558–576 (VWVMMFVMLLIVSAVAVFV) traverse the membrane as a helical segment. Over 577–603 (FEYFSPVGYNRCLADGREPGGPSFTIG) the chain is Cytoplasmic. An intramembrane region (discontinuously helical) is located at residues 604–623 (KAIWLLWGLVFNNSVPVQNP). Residues 604–623 (KAIWLLWGLVFNNSVPVQNP) form a pore-forming region. The Cytoplasmic segment spans residues 624-630 (KGTTSKI). The helical transmembrane segment at 631 to 646 (MVSVWAFFAVIFLASY) threads the bilayer. Residues 647–817 (TANLAAFMIQ…VMSSQLDIDN (171 aa)) lie on the Extracellular side of the membrane. N688 carries N-linked (GlcNAc...) asparagine glycosylation. Residues S690, T691, and D732 each coordinate L-glutamate. The cysteines at positions 746 and 801 are disulfide-linked. A helical transmembrane segment spans residues 818–837 (MAGVFYMLGAAMALSLITFI). Residues 838–1482 (CEHLFYWQFR…EKLSSIESDV (645 aa)) lie on the Cytoplasmic side of the membrane. Phosphoserine is present on residues S882, S886, S917, and S920. Phosphotyrosine occurs at positions 962 and 1039. Phosphoserine occurs at positions 1058, 1061, and 1064. Phosphotyrosine occurs at positions 1109 and 1133. The residue at position 1143 (S1143) is a Phosphoserine. The residue at position 1155 (Y1155) is a Phosphotyrosine. Residues 1161 to 1194 (DFKRDSVSGGGPCTNRSHLKHGTGEKHGVVGGVP) form a disordered region. S1255 and S1259 each carry phosphoserine. Residues 1269-1301 (PVAVTSNASSTKYPQSPTNSKAQKKNRNKLRRQ) are disordered. A compositionally biased stretch (polar residues) spans 1272-1289 (VTSNASSTKYPQSPTNSK). The segment covering 1290-1301 (AQKKNRNKLRRQ) has biased composition (basic residues). Residues 1292–1304 (KKNRNKLRRQHSY) are interaction with DAPK1. S1303 bears the Phosphoserine mark. A Phosphotyrosine modification is found at Y1472. The short motif at 1480–1482 (SDV) is the PDZ-binding element.

The protein belongs to the glutamate-gated ion channel (TC 1.A.10.1) family. NR2B/GRIN2B subfamily. Heterotetramer. Forms heterotetrameric channels composed of two GluN1/zeta subunits (GRIN1), and two identical GluN2/epsilon subunits (GRIN2A, GRIN2B, GRIN2C or GRIN2D) or GluN3 subunits (GRIN3A or GRIN3B) (in vitro). Can also form heterotetrameric channels that contain at least two GluN1 subunits and at least two different GluN2 subunits (or a combination of one GluN2 and one GluN3 subunits) (in vitro). In vivo, the subunit composition may depend on the expression levels of the different subunits. Found in a complex with GRIN1, GRIN3A and PPP2CB. Found in a complex with GRIN1 and GRIN3B. Interacts with MAGI3. Interacts with HIP1 and NETO1. Interacts with PDZ domains of PATJ, DLG3 and DLG4. Interacts with DAPK1. Found in a complex with GRIN1 and PRR7. Interacts with PRR7. Interacts with CAMK2A. Interacts with ARC; preventing ARC oligomerization. Interacts with TMEM25. Interacts (via the extreme C-terminus) with FRMPD2 (via the second PDZ domain); the interaction is direct and is likely to promote NMDAR-mediated neural signal transmission. Interacts with FAM81A; the interaction facilitates condensate formation via liquid-liquid phase separation. Post-translationally, phosphorylated on tyrosine residues. Phosphorylation at Ser-1303 by DAPK1 enhances synaptic NMDA receptor channel activity. In terms of tissue distribution, expressed in the hippocampus including the dentate gyrus (at protein level). Detected in adult olfactory bulb, brain cortex, hippocampus, striatum, thalamus, superior colliculus, with much lower levels in inferior colliculus, midbrain and cerebellum.

The protein localises to the cell membrane. Its subcellular location is the postsynaptic cell membrane. The protein resides in the late endosome. It is found in the lysosome. It localises to the cytoplasm. The protein localises to the cytoskeleton. The enzyme catalyses Ca(2+)(in) = Ca(2+)(out). It carries out the reaction Na(+)(in) = Na(+)(out). It catalyses the reaction K(+)(in) = K(+)(out). NMDA glutamate receptor activity is inhibited by micromolar levels of zinc ions. NMDA glutamate receptor activity is inhibited by ifenprodil. Component of N-methyl-D-aspartate (NMDA) receptors (NMDARs) that function as heterotetrameric, ligand-gated cation channels with high calcium permeability and voltage-dependent block by Mg(2+). Participates in synaptic plasticity for learning and memory formation by contributing to the long-term depression (LTD) of hippocampus membrane currents. Channel activation requires binding of the neurotransmitter L-glutamate to the GluN2 subunit, glycine or D-serine binding to the GluN1 subunit, plus membrane depolarization to eliminate channel inhibition by Mg(2+). NMDARs mediate simultaneously the potasium efflux and the influx of calcium and sodium. Each GluN2 subunit confers differential attributes to channel properties, including activation, deactivation and desensitization kinetics, pH sensitivity, Ca2(+) permeability, and binding to allosteric modulators. In concert with DAPK1 at extrasynaptic sites, acts as a central mediator for stroke damage. Its phosphorylation at Ser-1303 by DAPK1 enhances synaptic NMDA receptor channel activity inducing injurious Ca2+ influx through them, resulting in an irreversible neuronal death. This is Glutamate receptor ionotropic, NMDA 2B from Rattus norvegicus (Rat).